A 377-amino-acid chain; its full sequence is WAT1-related protein At3g56620 (377 aa).

Helical transmembrane passes span 13–33 (FAMV…KVVL), 40–60 (YVLV…FALL), 67–87 (PKMT…GPLI), 102–122 (TFAG…SIIC), 142–162 (LVIV…ITFL), 183–203 (VFLL…AATL), 210–230 (LSLS…LTFV), 235–255 (LSAW…AGIM), 274–294 (IFVT…GFLI), and 299–319 (LNLG…TVLW). EamA domains lie at 22-152 (YAGM…MLMI) and 190-318 (FSWA…CTVL).

Belongs to the drug/metabolite transporter (DMT) superfamily. Plant drug/metabolite exporter (P-DME) (TC 2.A.7.4) family.

The protein resides in the membrane. The polypeptide is WAT1-related protein At3g56620 (Arabidopsis thaliana (Mouse-ear cress)).